The sequence spans 240 residues: tRNA1(Val) (adenine(37)-N6)-methyltransferase (240 aa).

It belongs to the methyltransferase superfamily. tRNA (adenine-N(6)-)-methyltransferase family.

The protein resides in the cytoplasm. It carries out the reaction adenosine(37) in tRNA1(Val) + S-adenosyl-L-methionine = N(6)-methyladenosine(37) in tRNA1(Val) + S-adenosyl-L-homocysteine + H(+). Specifically methylates the adenine in position 37 of tRNA(1)(Val) (anticodon cmo5UAC). This Vibrio cholerae serotype O1 (strain ATCC 39315 / El Tor Inaba N16961) protein is tRNA1(Val) (adenine(37)-N6)-methyltransferase.